Consider the following 501-residue polypeptide: Cystine/glutamate transporter (501 aa).

Residues 1-43 (MVRKPVVSTISKGGYLQGNVNGRLPSLGNKEPPGQEKVQLKRK) are Cytoplasmic-facing. Serine 26 is subject to Phosphoserine. Residues 44–64 (VTLLRGVSIIIGTIIGAGIFI) form a helical membrane-spanning segment. The Extracellular portion of the chain corresponds to 65–74 (SPKGVLQNTG). Residues 75–95 (SVGMSLTIWTVCGVLSLFGAL) traverse the membrane as a helical segment. At 96–101 (SYAELG) the chain is on the cytoplasmic side. An intramembrane segment occupies 102–116 (TTIKKSGGHYTYILE). Residues 117–130 (VFGPLPAFVRVWVE) lie on the Cytoplasmic side of the membrane. Residues 131 to 150 (LLIIRPAATAVISLAFGRYI) traverse the membrane as a helical segment. Arginine 135 contacts L-glutamate. Residues 151-163 (LEPFFIQCEIPEL) are Extracellular-facing. A helical transmembrane segment spans residues 164-179 (AIKLITAVGITVVMVL). At 180-193 (NSMSVSWSARIQIF) the chain is on the cytoplasmic side. The chain crosses the membrane as a helical span at residues 194–210 (LTFCKLTAILIIIVPGV). At 211-234 (MQLIKGQTQNFKDAFSGRDSSITR) the chain is on the extracellular side. A helical membrane pass occupies residues 235 to 255 (LPLAFYYGMYAYAGWFYLNFV). Tyrosine 244 lines the L-glutamate pocket. Residues 256 to 265 (TEEVENPEKT) lie on the Cytoplasmic side of the membrane. A helical membrane pass occupies residues 266-286 (IPLAICISMAIVTIGYVLTNV). Residues 287-317 (AYFTTINAEELLLSNAVAVTFSERLLGNFSL) are Extracellular-facing. N-linked (GlcNAc...) asparagine glycosylation occurs at asparagine 314. Residues 318-338 (AVPIFVALSCFGSMNGGVFAV) form a helical membrane-spanning segment. Residues 339–364 (SRLFYVASREGHLPEILSMIHVRKHT) are Cytoplasmic-facing. Residues 365–385 (PLPAVIVLHPLTMIMLFSGDL) traverse the membrane as a helical segment. The Extracellular segment spans residues 386–387 (DS). The chain crosses the membrane as a helical span at residues 388–408 (LLNFLSFARWLFIGLAVAGLI). Over 409–422 (YLRYKCPDMHRPFK) the chain is Cytoplasmic. A helical transmembrane segment spans residues 423–443 (VPLFIPALFSFTCLFMVALSL). The Extracellular segment spans residues 444–449 (YSDPFS). The helical transmembrane segment at 450–470 (TGIGFVITLTGVPAYYLFIIW) threads the bilayer. Topologically, residues 471-501 (DKKPRWFRIMSEKITRTLQIILEVVPEEDKL) are cytoplasmic.

This sequence belongs to the amino acid-polyamine-organocation (APC) superfamily. L-type amino acid transporter (LAT) (TC 2.A.3.8) family. In terms of assembly, disulfide-linked heterodimer with the amino acid transport protein SLC3A2/4F2hc; this interaction mediates cell membrane localization. Ubiquitinated by TRIM26; leading to proteasomal degradation. In terms of tissue distribution, expressed in term placenta and primary term cytotrophoblast. Expressed mainly in the brain, but also in pancreas.

The protein localises to the cell membrane. It is found in the cell projection. The protein resides in the microvillus membrane. The enzyme catalyses L-cystine(out) + L-glutamate(in) = L-cystine(in) + L-glutamate(out). It catalyses the reaction an L-alpha-amino acid(in) + L-kynurenine(out) = an L-alpha-amino acid(out) + L-kynurenine(in). The catalysed reaction is N-acetyl-L-cysteine(out) + L-glutamate(in) = N-acetyl-L-cysteine(in) + L-glutamate(out). Inhibited by erastin and sulfasalazine. Inhibited by (S)-lactate. Inactivated by p-chloromercuribenzoic acid and p-chloromercuribenzenesulfonic acid. Functionally, heterodimer with SLC3A2, that functions as an antiporter by mediating the exchange of extracellular anionic L-cystine and intracellular L-glutamate across the cellular plasma membrane. Provides L-cystine for the maintenance of the redox balance between extracellular L-cystine and L-cysteine and for the maintenance of the intracellular levels of glutathione that is essential for cells protection from oxidative stress. The transport is sodium-independent, electroneutral with a stoichiometry of 1:1, and is drove by the high intracellular concentration of L-glutamate and the intracellular reduction of L-cystine. In addition, mediates the import of L-kynurenine leading to anti-ferroptotic signaling propagation required to maintain L-cystine and glutathione homeostasis. Moreover, mediates N-acetyl-L-cysteine uptake into the placenta leading to subsequently down-regulation of pathways associated with oxidative stress, inflammation and apoptosis. In vitro can also transport L-aspartate. May participate in astrocyte and meningeal cell proliferation during development and can provide neuroprotection by promoting glutathione synthesis and delivery from non-neuronal cells such as astrocytes and meningeal cells to immature neurons. Controls the production of pheomelanin pigment directly. The sequence is that of Cystine/glutamate transporter from Homo sapiens (Human).